A 194-amino-acid chain; its full sequence is Small ribosomal subunit protein eS7 (194 aa).

This sequence belongs to the eukaryotic ribosomal protein eS7 family.

The protein is Small ribosomal subunit protein eS7 (RpS7) of Drosophila yakuba (Fruit fly).